Consider the following 297-residue polypeptide: MAKALQGVMAALLTPFDHQQQLDSESLRRLVRFNIGQGIDGLYVGGSTGEAFVQSLAEREQVLEIVAEEAKGKITLIAHVGTVSTAESQQLASAAKRYGFDAVSAVTPFYYPFSFEEHCDHYRAIIDSADGLPMVVYNIPALSGVKLTLDQINTLVTLPGVSALKQTSGDLFQMEQIRRAHPDLVLYNGYDEIFASGLLAGADGGIGSTYNIMGWRYQGIVQALREGDVAKAQRLQTECNKVIDLLIKTGVFRGLKTVLHYMDVVSVPLCRKPLAPVDEKYLPALKALAQQLMEEKA.

The aceneuramate site is built by Ser47 and Thr48. Tyr137 functions as the Proton donor in the catalytic mechanism. Catalysis depends on Lys165, which acts as the Schiff-base intermediate with substrate. Aceneuramate is bound by residues Thr167, Gly189, Asp191, Glu192, and Ser208.

This sequence belongs to the DapA family. NanA subfamily. As to quaternary structure, homotetramer.

It is found in the cytoplasm. The catalysed reaction is aceneuramate = aldehydo-N-acetyl-D-mannosamine + pyruvate. The protein operates within amino-sugar metabolism; N-acetylneuraminate degradation; D-fructose 6-phosphate from N-acetylneuraminate: step 1/5. Catalyzes the reversible aldol cleavage of N-acetylneuraminic acid (sialic acid; Neu5Ac) to form pyruvate and N-acetylmannosamine (ManNAc) via a Schiff base intermediate. The chain is N-acetylneuraminate lyase from Salmonella agona (strain SL483).